The primary structure comprises 263 residues: Hydroxyethylthiazole kinase 1 (263 aa).

Position 42 (M42) interacts with substrate. 2 residues coordinate ATP: K118 and T164. G191 serves as a coordination point for substrate.

The protein belongs to the Thz kinase family. The cofactor is Mg(2+).

The catalysed reaction is 5-(2-hydroxyethyl)-4-methylthiazole + ATP = 4-methyl-5-(2-phosphooxyethyl)-thiazole + ADP + H(+). It participates in cofactor biosynthesis; thiamine diphosphate biosynthesis; 4-methyl-5-(2-phosphoethyl)-thiazole from 5-(2-hydroxyethyl)-4-methylthiazole: step 1/1. Its function is as follows. Catalyzes the phosphorylation of the hydroxyl group of 4-methyl-5-beta-hydroxyethylthiazole (THZ). The protein is Hydroxyethylthiazole kinase 1 of Clostridium botulinum (strain Kyoto / Type A2).